We begin with the raw amino-acid sequence, 326 residues long: Microtubule-associated protein RP/EB family member 2 (326 aa).

Serine 9 carries the phosphoserine modification. Residues 56–158 form the Calponin-homology (CH) domain; that stretch reads TMSRHDIIAW…FIQWFKKFYD (103 aa). Tyrosine 166 carries the post-translational modification Phosphotyrosine. Disordered stretches follow at residues 170–239 and 298–326; these read EARQ…DKDL and ASDE…QEEY. Positions 186-326 are DCTN1-binding; sequence QIFNLPKKSH…EQQPQQQEEY (141 aa). Over residues 199–233 the composition is skewed to low complexity; the sequence is SPTAGAAKSSPASKPGSTPSRPSSAKRASSSGSAS. Phosphoserine is present on residues serine 218 and serine 235. Residues 235–305 form the EB1 C-terminal domain; sequence SDKDLETQVI…LYASDEHEGH (71 aa). The tract at residues 258-301 is APC-binding; the sequence is EGVEKERDFYFGKLREIELLCQEHGQENDDLVQRLMDVLYASDE. Basic and acidic residues predominate over residues 299-316; that stretch reads SDEHEGHPEEPEAEEQVH. Low complexity predominate over residues 317 to 326; the sequence is EQQPQQQEEY.

Belongs to the MAPRE family. In terms of assembly, interacts with DCTN1. Interacts with APC (via C-terminal). Interacts with monomeric and polymerized tubulin. Interacts with SLAIN1. Interacts (via the N-terminal region) with BAG1. Interacts with ASB14. Interacts with HAX1; this interaction is essential for epidermal cell migration. In terms of processing, phosphorylated at Ser-235 by CK2 leading to enhanced cell adhesion. Phosphorylated by CDK1 and AURKB during mitosis reduces the binding affinity of MAPRE2 for microtubules. Ubiquitinated in an ASB14-dependent manner; leading to proteasomal degradation.

The protein localises to the cytoplasm. It localises to the cytoskeleton. Adapter protein that is involved in microtubule polymerization, and spindle function by stabilizing microtubules and anchoring them at centrosomes. Therefore, ensures mitotic progression and genome stability. Acts as a central regulator of microtubule reorganization in apico-basal epithelial differentiation. Plays a role during oocyte meiosis by regulating microtubule dynamics. Participates in neurite growth by interacting with plexin B3/PLXNB3 and microtubule reorganization during apico-basal epithelial differentiation. Also plays an essential role for cell migration and focal adhesion dynamics. Mechanistically, recruits HAX1 to microtubules in order to regulate focal adhesion dynamics. The chain is Microtubule-associated protein RP/EB family member 2 (MAPRE2) from Bos taurus (Bovine).